A 233-amino-acid polypeptide reads, in one-letter code: MNGVYDVGGTDGLGPINRPADEPVFRAEWEKVAFAMFPATFRAGFMGLDEFRFGIEQMNPAEYLESPYYWHWIRTYIHHGVRTGKIDLEELERRTQYYRENPDAPLPEHEQKPELIEFVNQAVYGGLPASREVDRPPKFKEGDVVRFSTASPKGHARRARYVRGKTGTVVKHHGAYIYPDTAGNGLGECPEHLYTVRFTAQELWGPEGDPNSSVYYDCWEPYIELVDTKAAAA.

This sequence belongs to the nitrile hydratase subunit beta family. Heterotetramer of two alpha and two beta chains.

It catalyses the reaction an aliphatic primary amide = an aliphatic nitrile + H2O. Its function is as follows. NHase catalyzes the hydration of various nitrile compounds to the corresponding amides. This is Cobalt-containing nitrile hydratase subunit beta from Pseudonocardia thermophila.